Reading from the N-terminus, the 144-residue chain is Small ribosomal subunit protein bS6 (144 aa).

The disordered stretch occupies residues 92–144 (KVDGHDEGPSVQMQKRDDRGDREERGDRGDRGDRGPRGDRGPREDRGPRPERR). Residues 93–144 (VDGHDEGPSVQMQKRDDRGDREERGDRGDRGDRGPRGDRGPREDRGPRPERR) show a composition bias toward basic and acidic residues.

The protein belongs to the bacterial ribosomal protein bS6 family.

Functionally, binds together with bS18 to 16S ribosomal RNA. The polypeptide is Small ribosomal subunit protein bS6 (rpsF) (Rhodobacter capsulatus (strain ATCC BAA-309 / NBRC 16581 / SB1003)).